We begin with the raw amino-acid sequence, 106 residues long: MVRILRWFIRLYQIAISPLLGPRCRYIPTCSQYALEALQTHGAIKGVWLSSKRICRCHPWGGSGYDPVPLKAIRFISFHQIDSQTHHVAVPFRDRLMKQNLSNHLG.

This sequence belongs to the UPF0161 family.

The protein localises to the cell inner membrane. In terms of biological role, could be involved in insertion of integral membrane proteins into the membrane. This chain is Putative membrane protein insertion efficiency factor, found in Acinetobacter baumannii (strain SDF).